The chain runs to 456 residues: tRNA modification GTPase MnmE (456 aa).

Residues R21, E85, and K124 each contribute to the (6S)-5-formyl-5,6,7,8-tetrahydrofolate site. Residues 220–379 (QLRIVLYGEP…LLDEIQKKAA (160 aa)) form the TrmE-type G domain. Residue N230 coordinates K(+). Residues 230 to 235 (NTGKSS), 249 to 255 (SEIPGTT), and 274 to 277 (DTAG) each bind GTP. S234 provides a ligand contact to Mg(2+). Positions 249, 251, and 254 each coordinate K(+). T255 provides a ligand contact to Mg(2+). K456 is a (6S)-5-formyl-5,6,7,8-tetrahydrofolate binding site.

It belongs to the TRAFAC class TrmE-Era-EngA-EngB-Septin-like GTPase superfamily. TrmE GTPase family. In terms of assembly, homodimer. Heterotetramer of two MnmE and two MnmG subunits. Requires K(+) as cofactor.

The protein localises to the cytoplasm. Its function is as follows. Exhibits a very high intrinsic GTPase hydrolysis rate. Involved in the addition of a carboxymethylaminomethyl (cmnm) group at the wobble position (U34) of certain tRNAs, forming tRNA-cmnm(5)s(2)U34. This chain is tRNA modification GTPase MnmE, found in Leptospira borgpetersenii serovar Hardjo-bovis (strain JB197).